The chain runs to 123 residues: Small ribosomal subunit protein uS12 (123 aa).

The segment at 1–29 is disordered; that stretch reads MPTINQLIRKKRQSSASRKKSPALQKCPQ. A compositionally biased stretch (basic residues) spans 8-21; sequence IRKKRQSSASRKKS. Position 89 is a 3-methylthioaspartic acid (Asp89).

Belongs to the universal ribosomal protein uS12 family. In terms of assembly, part of the 30S ribosomal subunit. Contacts proteins S8 and S17. May interact with IF1 in the 30S initiation complex.

In terms of biological role, with S4 and S5 plays an important role in translational accuracy. Functionally, interacts with and stabilizes bases of the 16S rRNA that are involved in tRNA selection in the A site and with the mRNA backbone. Located at the interface of the 30S and 50S subunits, it traverses the body of the 30S subunit contacting proteins on the other side and probably holding the rRNA structure together. The combined cluster of proteins S8, S12 and S17 appears to hold together the shoulder and platform of the 30S subunit. In Chlamydia abortus (strain DSM 27085 / S26/3) (Chlamydophila abortus), this protein is Small ribosomal subunit protein uS12.